The following is a 541-amino-acid chain: Arginine--tRNA ligase (541 aa).

The 'HIGH' region motif lies at 119 to 129; that stretch reads ANPTGPLHIGH.

Belongs to the class-I aminoacyl-tRNA synthetase family. As to quaternary structure, monomer.

The protein localises to the cytoplasm. The enzyme catalyses tRNA(Arg) + L-arginine + ATP = L-arginyl-tRNA(Arg) + AMP + diphosphate. In Helicobacter pylori (strain Shi470), this protein is Arginine--tRNA ligase.